The chain runs to 199 residues: AICSLVLYLLSLMLMEKLSSNTVDAQEVELIWTILPAIVLILLALPSLQILYMMDEIDEPDLTLKAIGHQWYWSYEYTDFKDLAFDSYMIPTTELPSGHFRLLEVDHRVVVPMESPIRVIVTAGDVLHSWAVPTLGVKTDAIPGRLNQTSFITTRPGIFYGQCSEICGANHSYMPIVVESTPLAHFESWSSLLSSSSSL.

Residues 1–13 (AICSLVLYLLSLM) form a helical membrane-spanning segment. Residues 14–26 (LMEKLSSNTVDAQ) are Mitochondrial matrix-facing. The chain crosses the membrane as a helical span at residues 27–54 (EVELIWTILPAIVLILLALPSLQILYMM). At 55–199 (DEIDEPDLTL…SSLLSSSSSL (145 aa)) the chain is on the mitochondrial intermembrane side. Cu cation contacts are provided by H128, C163, E165, C167, H171, and M174. Position 165 (E165) interacts with Mg(2+).

It belongs to the cytochrome c oxidase subunit 2 family. In terms of assembly, component of the cytochrome c oxidase (complex IV, CIV), a multisubunit enzyme composed of 14 subunits. The complex is composed of a catalytic core of 3 subunits MT-CO1, MT-CO2 and MT-CO3, encoded in the mitochondrial DNA, and 11 supernumerary subunits COX4I, COX5A, COX5B, COX6A, COX6B, COX6C, COX7A, COX7B, COX7C, COX8 and NDUFA4, which are encoded in the nuclear genome. The complex exists as a monomer or a dimer and forms supercomplexes (SCs) in the inner mitochondrial membrane with NADH-ubiquinone oxidoreductase (complex I, CI) and ubiquinol-cytochrome c oxidoreductase (cytochrome b-c1 complex, complex III, CIII), resulting in different assemblies (supercomplex SCI(1)III(2)IV(1) and megacomplex MCI(2)III(2)IV(2)). Found in a complex with TMEM177, COA6, COX18, COX20, SCO1 and SCO2. Interacts with TMEM177 in a COX20-dependent manner. Interacts with COX20. Interacts with COX16. The cofactor is Cu cation.

The protein resides in the mitochondrion inner membrane. It carries out the reaction 4 Fe(II)-[cytochrome c] + O2 + 8 H(+)(in) = 4 Fe(III)-[cytochrome c] + 2 H2O + 4 H(+)(out). Functionally, component of the cytochrome c oxidase, the last enzyme in the mitochondrial electron transport chain which drives oxidative phosphorylation. The respiratory chain contains 3 multisubunit complexes succinate dehydrogenase (complex II, CII), ubiquinol-cytochrome c oxidoreductase (cytochrome b-c1 complex, complex III, CIII) and cytochrome c oxidase (complex IV, CIV), that cooperate to transfer electrons derived from NADH and succinate to molecular oxygen, creating an electrochemical gradient over the inner membrane that drives transmembrane transport and the ATP synthase. Cytochrome c oxidase is the component of the respiratory chain that catalyzes the reduction of oxygen to water. Electrons originating from reduced cytochrome c in the intermembrane space (IMS) are transferred via the dinuclear copper A center (CU(A)) of subunit 2 and heme A of subunit 1 to the active site in subunit 1, a binuclear center (BNC) formed by heme A3 and copper B (CU(B)). The BNC reduces molecular oxygen to 2 water molecules using 4 electrons from cytochrome c in the IMS and 4 protons from the mitochondrial matrix. In Rhea americana (Greater rhea), this protein is Cytochrome c oxidase subunit 2 (MT-CO2).